Consider the following 421-residue polypeptide: Uracil permease (421 aa).

Helical transmembrane passes span 18–38 (IPLSLQHLFAMFGSTVLVPML), 41–61 (INPAICLLMNGIGTLIYIFLC), 65–85 (IPAYLGSSFAFISPVLIVIST), 89–109 (EAALSGFLVVGLVFCLIGLLV), 115–135 (GWIEIVFPPAAMGAIVAVIGL), 160–180 (PKVIAVSLVTLLTAVVGNVMF), 186–206 (IIPILISIIVGYALAAFLGIV), 232–252 (IAIIVPAALVVVAEHIGHLIV), 304–324 (VYSIWIIGGAAVMAIVLSFVG), 329–349 (LIQTIPVPVMGGVSILLFGVI), 371–391 (ILTAVVLIIGISGAAFKWGNF), and 393–413 (MKGMALATVIAILLGLFFNII).

The protein belongs to the nucleobase:cation symporter-2 (NCS2) (TC 2.A.40) family.

Its subcellular location is the cell membrane. Inhibited by the proton gradient disruptor carbonyl cyanide m-chlorophenylhydrazone (CCCP), but not by the sodium gradient disruptor ouabain. Both xanthine and uric acid act as competitive inhibitors of uracil transport. Functionally, specific for the uptake of uracil. Transport is probably proton-dependent. The polypeptide is Uracil permease (Paenibacillus larvae subsp. larvae (strain NRRL B-3650 / LMG 16245)).